We begin with the raw amino-acid sequence, 470 residues long: Ubiquitin carboxyl-terminal hydrolase calypso (470 aa).

One can recognise a UCH catalytic domain in the interval 43–274 (GWLELESDPG…IRFNLMAVVP (232 aa)). Cysteine 129 (nucleophile) is an active-site residue. Histidine 211 functions as the Proton donor in the catalytic mechanism. Positions 305–324 (DEQGEGGNGDPQRPDTPSTL) are disordered. Positions 373–401 (NYDKFICTFLSMLAHQGVLGELVSQHLLP) constitute a ULD domain. Residues 403–470 (KKISGQSAAN…KGRNKCKKRK (68 aa)) form a positively charged C-terminal tail required for binding nucleosomes region. Low complexity predominate over residues 422–451 (ANAGATAAGAAGAAPKSQQQQAAAAKNGKS). A disordered region spans residues 422 to 470 (ANAGATAAGAAGAAPKSQQQQAAAAKNGKSPSKTPGRRRKGRNKCKKRK). A compositionally biased stretch (basic residues) spans 456–470 (PGRRRKGRNKCKKRK).

The protein belongs to the peptidase C12 family. BAP1 subfamily. Catalytic component of the polycomb repressive deubiquitinase (PR-DUB) complex, at least composed of caly/calypso, Asx and sba (MBD5/6 homolog). The PR-DUB complex associates with nucleosomes to mediate deubiquitination of histone H2AK118ub1 substrates; the association requires the positively charged C-terminal tail of caly, probably due to direct binding of DNA. Interacts (via ULD domain) with Asx (via DEUBAD domain); the interaction produces a stable heterodimer with a composite binding site for ubiquitin. Homodimerizes (via coiled-coil hinge-region between the UCH and ULD domains) to mediate assembly of 2 copies of the caly-Asx heterodimer into a bisymmetric tetramer; dimerization enhances PR-DUB association with nucleosomes.

It localises to the nucleus. The catalysed reaction is Thiol-dependent hydrolysis of ester, thioester, amide, peptide and isopeptide bonds formed by the C-terminal Gly of ubiquitin (a 76-residue protein attached to proteins as an intracellular targeting signal).. Catalytic component of the polycomb repressive deubiquitinase (PR-DUB) complex, a complex that specifically mediates deubiquitination of histone H2A monoubiquitinated at 'Lys-119' (H2AK118ub1). Mediates bisymmetric organization of the PR-DUB complex and is involved in association with nucleosomes to mediate deubiquitination. Does not deubiquitinate monoubiquitinated histone H2B. Required to maintain the transcriptionally repressive state of homeotic genes throughout development. The PR-DUB complex has weak or no activity toward 'Lys-48'- and 'Lys-63'-linked polyubiquitin chains. Polycomb group (PcG) protein. This Drosophila ananassae (Fruit fly) protein is Ubiquitin carboxyl-terminal hydrolase calypso.